We begin with the raw amino-acid sequence, 437 residues long: Oxysterol-binding protein homolog 7 (437 aa).

Positions 23 to 32 are enriched in polar residues; that stretch reads IASNAANSKP. The segment at 23–42 is disordered; the sequence is IASNAANSKPSGADTDDIDE. Residues 54-393 form an OSBP-related domain (ORD) region; sequence IISQLKPGCD…EDLDYYIYKH (340 aa). A 1,2-diacyl-sn-glycero-3-phospho-(1D-myo-inositol 4-phosphate) is bound by residues 64 to 69, 126 to 129, and 157 to 158; these read LSRITL, KPLN, and HH. A 1,2-diacyl-sn-glycero-3-phospho-L-serine-binding positions include 64–69 and Asn129; that span reads LSRITL. A 1,2-diacyl-sn-glycero-3-phospho-L-serine is bound at residue Ser183. Residue Lys276 forms a Glycyl lysine isopeptide (Lys-Gly) (interchain with G-Cter in ubiquitin) linkage. A 1,2-diacyl-sn-glycero-3-phospho-(1D-myo-inositol 4-phosphate)-binding residues include Lys351, Glu355, and Arg359.

This sequence belongs to the OSBP family. In terms of assembly, interacts with the AAA ATPase VPS4; regulates OSH7 membrane association. VPS4 is required for membrane dissociation of OSH7.

It is found in the cytoplasm. The protein localises to the cell membrane. Its subcellular location is the endoplasmic reticulum membrane. The catalysed reaction is a 1,2-diacyl-sn-glycero-3-phospho-L-serine(in) = a 1,2-diacyl-sn-glycero-3-phospho-L-serine(out). In terms of biological role, ipid transport protein (LTP) involved in non-vesicular transfer of lipids between membranes. Functions in phosphoinositide-coupled directional transport of various lipids by carrying the lipid molecule in a hydrophobic pocket and transferring it between membranes through the cytosol. Involved in maintenance of intracellular sterol distribution and homeostasis. Involved in lipid countertransport between the endoplasmic reticulum and the plasma membrane. Specifically exchanges phosphatidylserine with phosphatidylinositol 4-phosphate (PI4P), delivering phosphatidylserine to the PM in exchange for PI4P, which is delivered to the ER-localized PI4P phosphatase SAC1 for degradation. Thus, by maintaining a PI4P gradient at the ER/PM interface, SAC1 drives PS transport. Binds phosphatidylserine and PI4P in a mutually exclusive manner. This chain is Oxysterol-binding protein homolog 7, found in Saccharomyces cerevisiae (strain ATCC 204508 / S288c) (Baker's yeast).